The primary structure comprises 235 residues: 1-Cys peroxiredoxin (235 aa).

A Thioredoxin domain is found at 5 to 179 (ILLGDKFPDF…ILRVVDSLQL (175 aa)). C49 is a catalytic residue. The active-site Cysteine sulfenic acid (-SOH) intermediate is C49.

The protein belongs to the peroxiredoxin family. Prx6 subfamily.

It localises to the cytoplasm. It catalyses the reaction a hydroperoxide + [protein]-dithiol = [protein]-disulfide + an alcohol + H2O. Its function is as follows. Thiol-specific peroxidase that catalyzes the reduction of hydrogen peroxide and organic hydroperoxides to water and alcohols, respectively. Plays a role in cell protection against oxidative stress by detoxifying peroxides. The chain is 1-Cys peroxiredoxin from Dirofilaria immitis (Canine heartworm).